Here is a 334-residue protein sequence, read N- to C-terminus: rRNA 2'-O-methyltransferase fibrillarin (334 aa).

Over residues 1-93 (MEGRGGSRGG…GGKPAAGGKP (93 aa)) the composition is skewed to gly residues. Residues 1-94 (MEGRGGSRGG…GKPAAGGKPG (94 aa)) are disordered. Residues 184–185 (TT), 203–204 (EL), 228–229 (DA), and 248–251 (DVAQ) each bind S-adenosyl-L-methionine.

This sequence belongs to the methyltransferase superfamily. Fibrillarin family. As to quaternary structure, component of box C/D small nucleolar ribonucleoprotein (snoRNP) particles. It is associated with the U3, U8 and U13 small nuclear RNAs. Part of the small subunit (SSU) processome, composed of more than 70 proteins and the RNA chaperone small nucleolar RNA (snoRNA) U3. In terms of processing, by homology to other fibrillarins, some or all of the N-terminal domain arginines are modified to asymmetric dimethylarginine (DMA).

It is found in the nucleus. It localises to the nucleolus. The enzyme catalyses L-glutaminyl-[histone H2A] + S-adenosyl-L-methionine = N(5)-methyl-L-glutaminyl-[histone H2A] + S-adenosyl-L-homocysteine + H(+). Its function is as follows. S-adenosyl-L-methionine-dependent methyltransferase that has the ability to methylate both RNAs and proteins. Involved in pre-rRNA processing. Utilizes the methyl donor S-adenosyl-L-methionine to catalyze the site-specific 2'-hydroxyl methylation of ribose moieties in pre-ribosomal RNA. Site specificity is provided by a guide RNA that base pairs with the substrate. Methylation occurs at a characteristic distance from the sequence involved in base pairing with the guide RNA. Also acts as a protein methyltransferase by mediating methylation of 'Gln-105' of histone H2A (H2AQ105me), a modification that impairs binding of the FACT complex and is specifically present at 35S ribosomal DNA locus. Part of the small subunit (SSU) processome, first precursor of the small eukaryotic ribosomal subunit. During the assembly of the SSU processome in the nucleolus, many ribosome biogenesis factors, an RNA chaperone and ribosomal proteins associate with the nascent pre-rRNA and work in concert to generate RNA folding, modifications, rearrangements and cleavage as well as targeted degradation of pre-ribosomal RNA by the RNA exosome. The protein is rRNA 2'-O-methyltransferase fibrillarin (fbl) of Dictyostelium discoideum (Social amoeba).